The sequence spans 229 residues: Large ribosomal subunit protein uL1 (229 aa).

This sequence belongs to the universal ribosomal protein uL1 family. Part of the 50S ribosomal subunit.

Its function is as follows. Binds directly to 23S rRNA. The L1 stalk is quite mobile in the ribosome, and is involved in E site tRNA release. Protein L1 is also a translational repressor protein, it controls the translation of the L11 operon by binding to its mRNA. This chain is Large ribosomal subunit protein uL1, found in Lactococcus lactis subsp. cremoris (strain MG1363).